We begin with the raw amino-acid sequence, 776 residues long: Structure-specific endonuclease subunit SLX4 (776 aa).

Positions 201 to 217 (EEQMVSDDNSSTEDDTD) are enriched in acidic residues. Disordered regions lie at residues 201–223 (EEQM…QNDG), 263–283 (KSLQ…PDQN), and 507–531 (PPLD…KPHS).

This sequence belongs to the SLX4 family. As to quaternary structure, forms a heterodimer with SLX1. Post-translationally, phosphorylated in response to DNA damage.

The protein resides in the nucleus. Its function is as follows. Regulatory subunit of the SLX1-SLX4 structure-specific endonuclease that resolves DNA secondary structures generated during DNA repair and recombination. Has endonuclease activity towards branched DNA substrates, introducing single-strand cuts in duplex DNA close to junctions with ss-DNA. The protein is Structure-specific endonuclease subunit SLX4 of Candida albicans (strain SC5314 / ATCC MYA-2876) (Yeast).